Reading from the N-terminus, the 288-residue chain is Shikimate dehydrogenase (NADP(+)) (288 aa).

Shikimate contacts are provided by residues serine 21–serine 23 and threonine 68. Lysine 72 (proton acceptor) is an active-site residue. Positions 93 and 108 each coordinate shikimate. NADP(+) contacts are provided by residues glycine 132 to alanine 136 and leucine 230. Residue tyrosine 232 coordinates shikimate. Glycine 253 lines the NADP(+) pocket.

The protein belongs to the shikimate dehydrogenase family. In terms of assembly, homodimer.

It carries out the reaction shikimate + NADP(+) = 3-dehydroshikimate + NADPH + H(+). Its pathway is metabolic intermediate biosynthesis; chorismate biosynthesis; chorismate from D-erythrose 4-phosphate and phosphoenolpyruvate: step 4/7. In terms of biological role, involved in the biosynthesis of the chorismate, which leads to the biosynthesis of aromatic amino acids. Catalyzes the reversible NADPH linked reduction of 3-dehydroshikimate (DHSA) to yield shikimate (SA). The sequence is that of Shikimate dehydrogenase (NADP(+)) from Crocosphaera subtropica (strain ATCC 51142 / BH68) (Cyanothece sp. (strain ATCC 51142)).